We begin with the raw amino-acid sequence, 78 residues long: Sec-independent protein translocase protein TatA (78 aa).

Residues 1 to 21 (MGGISIWQLLIVALIVVLLFG) form a helical membrane-spanning segment. Positions 40 to 78 (KSAMSSEEEKKAIEDSASEKTAQTEEKKTESKDKDKEQV) are disordered. Residues 46 to 78 (EEEKKAIEDSASEKTAQTEEKKTESKDKDKEQV) show a composition bias toward basic and acidic residues.

It belongs to the TatA/E family. As to quaternary structure, the Tat system comprises two distinct complexes: a TatABC complex, containing multiple copies of TatA, TatB and TatC subunits, and a separate TatA complex, containing only TatA subunits. Substrates initially bind to the TatABC complex, which probably triggers association of the separate TatA complex to form the active translocon.

Its subcellular location is the cell inner membrane. Its function is as follows. Part of the twin-arginine translocation (Tat) system that transports large folded proteins containing a characteristic twin-arginine motif in their signal peptide across membranes. TatA could form the protein-conducting channel of the Tat system. This Shewanella sediminis (strain HAW-EB3) protein is Sec-independent protein translocase protein TatA.